Here is a 75-residue protein sequence, read N- to C-terminus: Tetrahydromethanopterin S-methyltransferase subunit F (75 aa).

The helical transmembrane segment at 53-73 (FAGLACGMVFAGVLLVPLLLL) threads the bilayer.

This sequence belongs to the MtrF family. The complex is composed of 8 subunits; MtrA, MtrB, MtrC, MtrD, MtrE, MtrF, MtrG and MtrH.

Its subcellular location is the cell membrane. The catalysed reaction is 5-methyl-5,6,7,8-tetrahydromethanopterin + coenzyme M + 2 Na(+)(in) = 5,6,7,8-tetrahydromethanopterin + methyl-coenzyme M + 2 Na(+)(out). It functions in the pathway one-carbon metabolism; methanogenesis from CO(2); methyl-coenzyme M from 5,10-methylene-5,6,7,8-tetrahydromethanopterin: step 2/2. In terms of biological role, part of a complex that catalyzes the formation of methyl-coenzyme M and tetrahydromethanopterin from coenzyme M and methyl-tetrahydromethanopterin. This is an energy-conserving, sodium-ion translocating step. This chain is Tetrahydromethanopterin S-methyltransferase subunit F, found in Methanopyrus kandleri (strain AV19 / DSM 6324 / JCM 9639 / NBRC 100938).